The sequence spans 138 residues: Small ribosomal subunit protein uS11c (138 aa).

A disordered region spans residues 1 to 23 (MAKTIPRIGSRKNGRIGSRKNTR). A compositionally biased stretch (basic residues) spans 9 to 23 (GSRKNGRIGSRKNTR).

Belongs to the universal ribosomal protein uS11 family. As to quaternary structure, part of the 30S ribosomal subunit.

The protein resides in the plastid. The protein localises to the chloroplast. The polypeptide is Small ribosomal subunit protein uS11c (Daucus carota (Wild carrot)).